Here is a 1375-residue protein sequence, read N- to C-terminus: Capping protein, Arp2/3 and myosin-I linker protein 3 (1375 aa).

Positions 124–151 are disordered; that stretch reads IRRGNADTPEGPRDTSPNSETSTSTTHS. The span at 138-151 shows a compositional bias: low complexity; that stretch reads TSPNSETSTSTTHS. LRR repeat units follow at residues 244 to 264, 274 to 295, 303 to 323, 335 to 357, 365 to 386, 392 to 413, 424 to 444, 455 to 475, 482 to 501, and 509 to 530; these read SLEELVLDNAGLKTDFVQKLA, VLHALILSHNPIEDKGFLSLSQ, GLTKLCLAKTAISPRGLQALG, SLRYLDLSKNPGLLATDEANALY, ALVHLDLSGTDCAVDMLLGALL, HLTYLNLARNSCSHRKGREAPP, TLSHVNLSATRLPLEALRALL, DLHLDLSSCELRSAGAQALQE, CIGSLDLSDNGFDSDLLTLV, and SLKHLFLGKNFNVKAKTLEEIL. Disordered stretches follow at residues 864 to 901 and 969 to 1375; these read RTLSDPPGGASQGQDPSSRGRGRNHDHEETDDELGTNI and KLRH…PGTD. Residues 981–997 are compositionally biased toward pro residues; sequence PRTTPPGPGRPSVPVPG. A compositionally biased stretch (basic and acidic residues) spans 1007 to 1022; sequence RLDEGLEDFFSRRVMD. A compositionally biased stretch (basic residues) spans 1047–1062; sequence QKKRRRGLFHFRRPRS. A compositionally biased stretch (pro residues) spans 1078–1097; it reads LPPPPPPPPTQESPPSPDPP. Over residues 1098–1108 the composition is skewed to low complexity; that stretch reads SLGNNSSPCWS. Positions 1219-1229 are enriched in basic and acidic residues; sequence RRAEATWHIAE. Residues 1233–1244 are compositionally biased toward polar residues; it reads ANHSCQSPSPAS. Over residues 1272 to 1281 the composition is skewed to pro residues; the sequence is PIGPRPPKPV. Positions 1348-1360 are enriched in basic and acidic residues; the sequence is QSCDKLEPDRRQP.

This sequence belongs to the CARMIL family.

It localises to the cytoplasm. The protein localises to the cell membrane. In Mus musculus (Mouse), this protein is Capping protein, Arp2/3 and myosin-I linker protein 3 (Carmil3).